A 205-amino-acid chain; its full sequence is Polyamine-modulated factor 1 (205 aa).

The segment at 1 to 30 (MAEASSANLGSGCEEKRHEGSSSESVPPGT) is disordered. Residues 141–193 (FLQQRDTLRRHVQKQEAENQQLADAVLAGRRQVEELQLQVQAQQQAWQALHRE) adopt a coiled-coil conformation.

In terms of assembly, component of the MIS12 complex composed of MIS12, DSN1, NSL1 and PMF1. Interacts with COPS7A. Interacts via its coiled-coil domain with the leucine-zipper domain of NFE2L2. The interaction with NFE2L2 is required for the transcriptional regulation of SSAT. Highest levels of expression in heart and skeletal muscle, with significant levels expressed in kidney and liver.

It localises to the nucleus. The protein localises to the chromosome. Its subcellular location is the centromere. The protein resides in the kinetochore. Part of the MIS12 complex which is required for normal chromosome alignment and segregation and kinetochore formation during mitosis. May act as a cotranscription partner of NFE2L2 involved in regulation of polyamine-induced transcription of SSAT. In Homo sapiens (Human), this protein is Polyamine-modulated factor 1.